Reading from the N-terminus, the 934-residue chain is Oxysterol-binding protein-related protein 6 (934 aa).

A disordered region spans residues 1-62; it reads MSSDEKGISP…RQLLEPEPVP (62 aa). N-acetylserine is present on serine 2. A compositionally biased stretch (low complexity) spans 14–29; sequence TSTPTHRSASSSTSSQ. A compositionally biased stretch (basic and acidic residues) spans 30-40; sequence RDSRQSIHILE. The residue at position 35 (serine 35) is a Phosphoserine. A compositionally biased stretch (polar residues) spans 42–53; sequence TASSSTEPSVSR. One can recognise a PH domain in the interval 86–181; sequence PDKHEGFMLK…WVSKLRHHRL (96 aa). Phosphoserine occurs at positions 190 and 290.

Belongs to the OSBP family. As to quaternary structure, homodimer. Interacts with OSBPL3. Expressed in brain and striated muscle (at protein level). Widely expressed. Expressed in skeletal muscle.

It is found in the cytoplasm. It localises to the cytosol. Its subcellular location is the endoplasmic reticulum membrane. The protein localises to the nucleus envelope. The protein resides in the cell membrane. It is found in the endosome membrane. Its function is as follows. Regulates cellular transport and efflux of cholesterol. Plays a role in phosphatidylinositol-4-phophate (PI4P) turnover at the neuronal membrane. Binds via its PH domain PI4P, phosphatidylinositol-4,5-diphosphate, phosphatidylinositol-3,4,5-triphosphate, and phosphatidic acid. Weakly binds 25-hydroxycholesterol. This Homo sapiens (Human) protein is Oxysterol-binding protein-related protein 6 (OSBPL6).